Consider the following 859-residue polypeptide: Bifunctional levopimaradiene synthase, chloroplastic (859 aa).

The transit peptide at 1–52 (MALLSSSLSSHIPTGAHHLTLNAYANTQCIPHFFSTLNAGTSAGKRSSLYLR) directs the protein to the chloroplast. Mg(2+) is bound by residues D392, D394, D611, D615, N755, and E763. The DXDD motif motif lies at 392–395 (DIDD). The DDXXD motif motif lies at 611-615 (DDLYD).

Belongs to the terpene synthase family. Tpsd subfamily. Requires Mg(2+) as cofactor. It depends on Mn(2+) as a cofactor.

The protein localises to the plastid. It is found in the chloroplast. It catalyses the reaction (+)-copalyl diphosphate = abieta-8(14),12-diene + diphosphate. The catalysed reaction is (+)-copalyl diphosphate = abieta-7,13-diene + diphosphate. It functions in the pathway secondary metabolite biosynthesis; terpenoid biosynthesis. It participates in terpene metabolism; oleoresin biosynthesis. Terpene synthase (di-TPS) involved in the biosynthesis of diterpene natural products included in conifer oleoresin secretions and volatile emissions; these compounds contribute to biotic and abiotic stress defense against herbivores and pathogens. Catalyzes the conversion of (+)-copalyl diphosphate ((+)-CPP) to isopimaradiene. This Picea sitchensis (Sitka spruce) protein is Bifunctional levopimaradiene synthase, chloroplastic.